Reading from the N-terminus, the 429-residue chain is 3-phosphoshikimate 1-carboxyvinyltransferase (429 aa).

3-phosphoshikimate contacts are provided by lysine 11, serine 12, and arginine 16. A phosphoenolpyruvate-binding site is contributed by lysine 11. Phosphoenolpyruvate contacts are provided by glycine 82 and arginine 110. Residues serine 155, glutamine 157, aspartate 302, and lysine 329 each coordinate 3-phosphoshikimate. Residue glutamine 157 coordinates phosphoenolpyruvate. The active-site Proton acceptor is aspartate 302. Arginine 333 and arginine 385 together coordinate phosphoenolpyruvate.

It belongs to the EPSP synthase family. Monomer.

It is found in the cytoplasm. It carries out the reaction 3-phosphoshikimate + phosphoenolpyruvate = 5-O-(1-carboxyvinyl)-3-phosphoshikimate + phosphate. Its pathway is metabolic intermediate biosynthesis; chorismate biosynthesis; chorismate from D-erythrose 4-phosphate and phosphoenolpyruvate: step 6/7. Its function is as follows. Catalyzes the transfer of the enolpyruvyl moiety of phosphoenolpyruvate (PEP) to the 5-hydroxyl of shikimate-3-phosphate (S3P) to produce enolpyruvyl shikimate-3-phosphate and inorganic phosphate. This is 3-phosphoshikimate 1-carboxyvinyltransferase from Helicobacter pylori (strain P12).